Reading from the N-terminus, the 341-residue chain is Phosphate acyltransferase (341 aa).

Belongs to the PlsX family. In terms of assembly, homodimer. Probably interacts with PlsY.

The protein resides in the cytoplasm. It catalyses the reaction a fatty acyl-[ACP] + phosphate = an acyl phosphate + holo-[ACP]. The protein operates within lipid metabolism; phospholipid metabolism. Catalyzes the reversible formation of acyl-phosphate (acyl-PO(4)) from acyl-[acyl-carrier-protein] (acyl-ACP). This enzyme utilizes acyl-ACP as fatty acyl donor, but not acyl-CoA. The protein is Phosphate acyltransferase of Vibrio vulnificus (strain CMCP6).